Consider the following 249-residue polypeptide: ATP synthase subunit a (249 aa).

6 consecutive transmembrane segments (helical) span residues 33-53, 83-103, 113-133, 139-159, 188-208, and 216-236; these read YMLIAVAIISLLMLASGAQLV, FFPLIFSLFMFICVSNLIGII, LIVTAALALLVFFTVLIYGVA, FFSIFVPHGVPGYILPLVMFI, VFAGFVAMLGFSLGALGWVGG, and VALYALEILVAFLQAYVFAIL.

This sequence belongs to the ATPase A chain family. F-type ATPases have 2 components, CF(1) - the catalytic core - and CF(0) - the membrane proton channel. CF(1) has five subunits: alpha(3), beta(3), gamma(1), delta(1), epsilon(1). CF(0) has three main subunits: a(1), b(2) and c(9-12). The alpha and beta chains form an alternating ring which encloses part of the gamma chain. CF(1) is attached to CF(0) by a central stalk formed by the gamma and epsilon chains, while a peripheral stalk is formed by the delta and b chains.

The protein resides in the cell inner membrane. Its function is as follows. Key component of the proton channel; it plays a direct role in the translocation of protons across the membrane. The protein is ATP synthase subunit a of Bradyrhizobium diazoefficiens (strain JCM 10833 / BCRC 13528 / IAM 13628 / NBRC 14792 / USDA 110).